A 232-amino-acid chain; its full sequence is Uracil phosphoribosyltransferase (232 aa).

Residue 38–42 coordinates GTP; it reads KGLVK. 5-phospho-alpha-D-ribose 1-diphosphate is bound by residues R87, R112, and 140–148; that span reads DPMIATGST. Residues I204 and 209–211 contribute to the uracil site; that span reads GDA. Position 210 (D210) interacts with 5-phospho-alpha-D-ribose 1-diphosphate.

It belongs to the UPRTase family. Mg(2+) serves as cofactor.

It carries out the reaction UMP + diphosphate = 5-phospho-alpha-D-ribose 1-diphosphate + uracil. It participates in pyrimidine metabolism; UMP biosynthesis via salvage pathway; UMP from uracil: step 1/1. With respect to regulation, allosterically activated by GTP. Functionally, catalyzes the conversion of uracil and 5-phospho-alpha-D-ribose 1-diphosphate (PRPP) to UMP and diphosphate. This chain is Uracil phosphoribosyltransferase, found in Pyrococcus furiosus (strain ATCC 43587 / DSM 3638 / JCM 8422 / Vc1).